The sequence spans 298 residues: Junctional adhesion molecule A (298 aa).

The signal sequence occupies residues 1 to 28; it reads MGTEARAGRRQLLVFTSVVLSSLALGRG. Ig-like V-type domains are found at residues 29 to 126 and 134 to 227; these read AVYT…VQLT and PTVH…EAVR. Topologically, residues 29-237 are extracellular; sequence AVYTSEPDVR…MEAAELNVGG (209 aa). Disulfide bonds link Cys49-Cys108 and Cys152-Cys211. N-linked (GlcNAc...) asparagine glycosylation is present at Asn184. A helical membrane pass occupies residues 238-258; that stretch reads IVAAVLVTLILLGFLILGIWF. The Cytoplasmic portion of the chain corresponds to 259–298; it reads AYRRGYFDRTKKGTSSKKVIYSQPAARSEGEFRQTSSFLV. Ser280 and Ser286 each carry phosphoserine.

This sequence belongs to the immunoglobulin superfamily. As to quaternary structure, interacts with the ninth PDZ domain of MPDZ. Interacts with the first PDZ domain of PARD3. The association between PARD3 and PARD6B probably disrupts this interaction. Interacts with ITGAL (via I-domain). Interacts with CD151. In terms of assembly, (Microbial infection) Interacts with calicivirus capsid protein. (Microbial infection) Interacts with the orthoreovirus sigma-1 capsid protein.

Its subcellular location is the cell junction. The protein localises to the tight junction. It localises to the cell membrane. Its function is as follows. Seems to play a role in epithelial tight junction formation. Appears early in primordial forms of cell junctions and recruits PARD3. The association of the PARD6-PARD3 complex may prevent the interaction of PARD3 with JAM1, thereby preventing tight junction assembly. Plays a role in regulating monocyte transmigration involved in integrity of epithelial barrier. Ligand for integrin alpha-L/beta-2 involved in memory T-cell and neutrophil transmigration. Involved in platelet activation. (Microbial infection) Acts as a functional receptor for murine norovirus. Functionally, (Microbial infection) In case of orthoreovirus infection, serves as receptor for the virus. This Felis catus (Cat) protein is Junctional adhesion molecule A (F11R).